Consider the following 139-residue polypeptide: Large ribosomal subunit protein uL16 (139 aa).

Residues 1 to 16 (MLIPRRVKHRKQHHPG) show a composition bias toward basic residues. Residues 1–25 (MLIPRRVKHRKQHHPGRSGQATGGT) form a disordered region.

It belongs to the universal ribosomal protein uL16 family. In terms of assembly, part of the 50S ribosomal subunit.

Its function is as follows. Binds 23S rRNA and is also seen to make contacts with the A and possibly P site tRNAs. The polypeptide is Large ribosomal subunit protein uL16 (Leifsonia xyli subsp. xyli (strain CTCB07)).